The primary structure comprises 503 residues: UDP-N-acetylmuramoylalanine--D-glutamate ligase (503 aa).

129 to 135 (GTNGKTT) contributes to the ATP binding site.

Belongs to the MurCDEF family.

The protein localises to the cytoplasm. It catalyses the reaction UDP-N-acetyl-alpha-D-muramoyl-L-alanine + D-glutamate + ATP = UDP-N-acetyl-alpha-D-muramoyl-L-alanyl-D-glutamate + ADP + phosphate + H(+). It functions in the pathway cell wall biogenesis; peptidoglycan biosynthesis. Cell wall formation. Catalyzes the addition of glutamate to the nucleotide precursor UDP-N-acetylmuramoyl-L-alanine (UMA). In Burkholderia orbicola (strain MC0-3), this protein is UDP-N-acetylmuramoylalanine--D-glutamate ligase.